Reading from the N-terminus, the 712-residue chain is MTTIILLAPLLGALIGGFGWRLITEKGALVVTTGLLFLSCILSWVVFLTLPAETQHIHLLDWIRSGALDTSWGIRLDRLTAIMLIVVTTVSALVHLYSWGYMAHDENWTHHEAYKARFFAYLSFFTFAMLMLVTSDNLVQMFFGWEGVGVASYLLIGFYYKKPSANAAAIKAFVVNRVGDFGFALGIMGLFFLTDSIDMDVIFASAPELAKTELHFLAWEFNAANLLAVLLFIGAMGKSAQLFLHTWLPDAMEGPTPVSALIHAATMVTAGVFLVCRMSPLFEYAPEAKMMVVYVGAVTAFFAATVGLVQNDIKRVIAYSTCSQLGYMFVAAGSGVYSVAMFHLLTHAFFKAMLFLGAGSVIHAMHHEQDMRNYGGLRKKIPFTFAIMMIGTLAITGVGIPFFSIGGVPVGFAGYLSKDAIIESAFASGNGFAFYVLVAAAGMTSFYSWRLIFLTFYGEARGDHHKHDHAHESPAVMLAPLALLAVGSVLAGMVWYHSFFGDKVASFFNLPAAAHGEAHGTEHATEGHVPEAAMTAEAAHEAAMAGTMAMAEPAAEHAVAKAPQGAIFMAETNHVIHDAHGVPDWVKLSPFGAMVTGFFFAWLYYIGDKPLPGRTARALPGLYRFLLNKWYFDELFDLLFVNPAKSLGRKLWKGGDGAVIDGAINGLALGWIPFFTRVAGRIQSGYLFHYAFAMVLGIVALMFWVVRTGGMN.

Helical transmembrane passes span 4-24 (IILL…RLIT), 28-48 (ALVV…VVFL), 79-99 (LTAI…LYSW), 113-133 (AYKA…LMLV), 138-158 (LVQM…LIGF), 183-203 (FALG…DVIF), 216-236 (FLAW…IGAM), 256-276 (TPVS…FLVC), 290-310 (MMVV…GLVQ), 325-345 (LGYM…FHLL), 346-366 (THAF…HAMH), 385-405 (FAIM…FFSI), 421-441 (IIES…VAAA), 475-495 (AVML…GMVW), 588-608 (LSPF…YIGD), 655-675 (GDGA…IPFF), and 686-706 (YLFH…FWVV).

Belongs to the complex I subunit 5 family. In terms of assembly, NDH-1 is composed of 14 different subunits. Subunits NuoA, H, J, K, L, M, N constitute the membrane sector of the complex.

The protein localises to the cellular chromatophore membrane. The catalysed reaction is a quinone + NADH + 5 H(+)(in) = a quinol + NAD(+) + 4 H(+)(out). Functionally, NDH-1 shuttles electrons from NADH, via FMN and iron-sulfur (Fe-S) centers, to quinones in the respiratory chain. The immediate electron acceptor for the enzyme in this species is believed to be ubiquinone. Couples the redox reaction to proton translocation (for every two electrons transferred, four hydrogen ions are translocated across the cytoplasmic membrane), and thus conserves the redox energy in a proton gradient. This Rhodobacter capsulatus (Rhodopseudomonas capsulata) protein is NADH-quinone oxidoreductase subunit L (nuoL).